Here is a 350-residue protein sequence, read N- to C-terminus: Probable deoxyhypusine synthase (350 aa).

Residues 96 to 100 (SNLIS), 122 to 124 (TAG), E128, and D229 each bind NAD(+). Residue 127–128 (EE) coordinates spermidine. A spermidine-binding site is contributed by D234. G276 lines the NAD(+) pocket. A spermidine-binding site is contributed by H281. NAD(+) is bound at residue 301–302 (SA). Residues 307 to 309 (GSD) and 316 to 322 (EAVSWGK) each bind spermidine. K322 acts as the Nucleophile in catalysis. 335–336 (EV) contacts NAD(+).

Belongs to the deoxyhypusine synthase family. It depends on NAD(+) as a cofactor.

The catalysed reaction is [eIF5A protein]-L-lysine + spermidine = [eIF5A protein]-deoxyhypusine + propane-1,3-diamine. The protein operates within protein modification; eIF5A hypusination. Its function is as follows. Catalyzes the NAD-dependent oxidative cleavage of spermidine and the subsequent transfer of the butylamine moiety of spermidine to the epsilon-amino group of a specific lysine residue of the eIF-5A precursor protein to form the intermediate deoxyhypusine residue. In Schizosaccharomyces pombe (strain 972 / ATCC 24843) (Fission yeast), this protein is Probable deoxyhypusine synthase.